Reading from the N-terminus, the 151-residue chain is FUN14 domain-containing protein 2 (151 aa).

The Cytoplasmic portion of the chain corresponds to 1–42 (MAANSQGNFDGKFEALDLAELTKKQPWWRKLFGQESGPSAEK). The helical transmembrane segment at 43–63 (YSVATQLVIGGVTGWCTGFVF) threads the bilayer. Topologically, residues 64–69 (QKVGKL) are mitochondrial intermembrane. A helical membrane pass occupies residues 70 to 90 (AATAVGGGFFLLQLANHTGYI). Topologically, residues 91-126 (KVDWQRVEKDMKKAKEQLKIRKNKQIPTEVKSKAEE) are cytoplasmic. A helical transmembrane segment spans residues 127-147 (VVSFVKKNVLVTGGFFGGFLL). The Mitochondrial intermembrane segment spans residues 148–151 (GMAS).

It belongs to the FUN14 family. Highly expressed in platelet (at protein level). Expressed in liver, brain, heart and muscle.

The protein resides in the mitochondrion outer membrane. It localises to the nucleus. Its function is as follows. Binds directly and specifically 1,2-Diacyl-sn-glycero-3-phospho-(1'-myo-inositol-3',4',5'-bisphosphate) (PIP3) leading to the recruitment of PIP3 to mitochondria and may play a role in the regulation of the platelet activation via AKT/GSK3B/cGMP signaling pathways. May act as transcription factor that regulates SREBP1 (isoform SREBP-1C) expression in order to modulate triglyceride (TG) homeostasis in hepatocytes. This is FUN14 domain-containing protein 2 from Mus musculus (Mouse).